The chain runs to 283 residues: Fructose-1,6-bisphosphatase class 1 (283 aa).

Mg(2+) is bound by residues Glu-67, Asp-86, Leu-88, and Asp-89. Residues 89 to 92 (DGSS), Tyr-195, and Lys-225 contribute to the substrate site. A Mg(2+)-binding site is contributed by Glu-231.

The protein belongs to the FBPase class 1 family. Homotetramer. The cofactor is Mg(2+).

Its subcellular location is the cytoplasm. The enzyme catalyses beta-D-fructose 1,6-bisphosphate + H2O = beta-D-fructose 6-phosphate + phosphate. Its pathway is carbohydrate biosynthesis; gluconeogenesis. This chain is Fructose-1,6-bisphosphatase class 1, found in Natronomonas pharaonis (strain ATCC 35678 / DSM 2160 / CIP 103997 / JCM 8858 / NBRC 14720 / NCIMB 2260 / Gabara) (Halobacterium pharaonis).